The chain runs to 271 residues: 3-methyl-2-oxobutanoate hydroxymethyltransferase (271 aa).

Residues aspartate 53 and aspartate 92 each coordinate Mg(2+). 3-methyl-2-oxobutanoate contacts are provided by residues 53-54 (DS), aspartate 92, and lysine 120. Glutamate 122 provides a ligand contact to Mg(2+). Residue glutamate 189 is the Proton acceptor of the active site.

The protein belongs to the PanB family. In terms of assembly, homodecamer; pentamer of dimers. Mg(2+) serves as cofactor.

Its subcellular location is the cytoplasm. The enzyme catalyses 3-methyl-2-oxobutanoate + (6R)-5,10-methylene-5,6,7,8-tetrahydrofolate + H2O = 2-dehydropantoate + (6S)-5,6,7,8-tetrahydrofolate. Its pathway is cofactor biosynthesis; (R)-pantothenate biosynthesis; (R)-pantoate from 3-methyl-2-oxobutanoate: step 1/2. Functionally, catalyzes the reversible reaction in which hydroxymethyl group from 5,10-methylenetetrahydrofolate is transferred onto alpha-ketoisovalerate to form ketopantoate. The sequence is that of 3-methyl-2-oxobutanoate hydroxymethyltransferase from Paraburkholderia phytofirmans (strain DSM 17436 / LMG 22146 / PsJN) (Burkholderia phytofirmans).